A 358-amino-acid polypeptide reads, in one-letter code: MGFDFGCLLKLCSTVLKPGGAPGPINYMEIGLNLIKIAAPYIVQYLGIMERPPRVDVEEFFQQAEVTEGFKPWEAPTHVSGTFRALFIGINYYCTSAELSGCCNDVKQIIATLQRKRIPIDEMSILVDERGFPGANGLPTRDNIVRYMAWLFGGAKPGDVLFMHYSGHGTHTRATSDTEEKFDQCLAPVDFSTKGCILDNDIFRILLSGLLQGVRLTVVFDCCHSGSMLDLPYTFVGSRSLRRSVAGHMQRIRKGNDCAGDVLMISGCADEQTSADVSNAATFGTGASGAGGAATQCLAYTILKVSNLSYQDMLIATRDMLRRKGFTQVPQLSASKPINLQQKFSLMTTFEVDPAVAT.

An important for catalytic activity region spans residues 1–84 (MGFDFGCLLK…APTHVSGTFR (84 aa)). Residues His-168 and Cys-223 contribute to the active site.

This sequence belongs to the peptidase C14B family. In terms of processing, in epimastigotes, the unprocessed enzyme appears to be the main form. Auto-processing is dispensable for catalytic activity towards small oligopeptide substrates.

It localises to the cytoplasm. It is found in the nucleus. Its activity is regulated as follows. Activated by Ca(2+). Functionally, cysteine protease that cleaves specifically after arginine or lysine residues. In epimastigotes, may play a role in cell cycle G1/S transition. The sequence is that of Metacaspase-3 from Trypanosoma cruzi (strain CL Brener).